The sequence spans 202 residues: Arenicin-2 (202 aa).

The signal sequence occupies residues 1–25 (MTSTQSVAVYATLILAIFCFNDIHC). Residues 26–181 (DPIAEARAAA…SGDNNEPEKR (156 aa)) constitute a propeptide that is removed on maturation. In terms of domain architecture, BRICHOS spans 73 to 168 (GDGVEGSVMV…ACQGKSVYWL (96 aa)). 2 disulfides stabilise this stretch: Cys100–Cys160 and Cys184–Cys201.

In terms of biological role, has antimicrobial activity against the Gram-negative bacteria E.coli and P.mirabilis, the Gram-positive bacterium L.monocytogenes and the yeast C.albicans. The chain is Arenicin-2 from Arenicola marina (Lugworm).